Reading from the N-terminus, the 303-residue chain is Protoheme IX farnesyltransferase (303 aa).

9 helical membrane-spanning segments follow: residues 25-45, 54-74, 104-124, 125-145, 151-171, 179-199, 227-247, 248-268, and 280-300; these read MGLV…AVVM, IPQI…ACAL, LLLL…LLNI, PSGV…SIWS, WNTV…WVAI, AIAL…ALAI, FIWL…GVVF, VVLA…TFKK, and FIYS…VSLL.

Belongs to the UbiA prenyltransferase family. Protoheme IX farnesyltransferase subfamily. As to quaternary structure, interacts with CtaA.

The protein resides in the cell membrane. It catalyses the reaction heme b + (2E,6E)-farnesyl diphosphate + H2O = Fe(II)-heme o + diphosphate. Its pathway is porphyrin-containing compound metabolism; heme O biosynthesis; heme O from protoheme: step 1/1. Converts heme B (protoheme IX) to heme O by substitution of the vinyl group on carbon 2 of heme B porphyrin ring with a hydroxyethyl farnesyl side group. In Staphylococcus aureus (strain bovine RF122 / ET3-1), this protein is Protoheme IX farnesyltransferase.